A 62-amino-acid polypeptide reads, in one-letter code: Small ribosomal subunit protein bS21 (62 aa).

Residues 38–62 (YEKPSERRKRKMNAAVRKNRRTRHG) are disordered.

This sequence belongs to the bacterial ribosomal protein bS21 family.

The sequence is that of Small ribosomal subunit protein bS21 from Gemmatimonas aurantiaca (strain DSM 14586 / JCM 11422 / NBRC 100505 / T-27).